The chain runs to 98 residues: Large ribosomal subunit protein uL23 (98 aa).

This sequence belongs to the universal ribosomal protein uL23 family. In terms of assembly, part of the 50S ribosomal subunit. Contacts protein L29, and trigger factor when it is bound to the ribosome.

Its function is as follows. One of the early assembly proteins it binds 23S rRNA. One of the proteins that surrounds the polypeptide exit tunnel on the outside of the ribosome. Forms the main docking site for trigger factor binding to the ribosome. This chain is Large ribosomal subunit protein uL23, found in Rickettsia canadensis (strain McKiel).